We begin with the raw amino-acid sequence, 589 residues long: Probable translation initiation factor IF-2 (589 aa).

One can recognise a tr-type G domain in the interval 14-229; it reads LRQPIVCVLG…LAGLAQRFLE (216 aa). Residues 23–30 are G1; it reads GHVDHGKT. GTP is bound at residue 23 to 30; sequence GHVDHGKT. The interval 48–52 is G2; it reads GITQR. The tract at residues 84–87 is G3; that stretch reads DTPG. Residues 84-88 and 138-141 contribute to the GTP site; these read DTPGH and NKID. The interval 138–141 is G4; that stretch reads NKID. Residues 206-208 are G5; sequence SAK.

This sequence belongs to the TRAFAC class translation factor GTPase superfamily. Classic translation factor GTPase family. IF-2 subfamily.

Function in general translation initiation by promoting the binding of the formylmethionine-tRNA to ribosomes. Seems to function along with eIF-2. The sequence is that of Probable translation initiation factor IF-2 (infB) from Thermoplasma acidophilum (strain ATCC 25905 / DSM 1728 / JCM 9062 / NBRC 15155 / AMRC-C165).